A 374-amino-acid chain; its full sequence is Methionine import ATP-binding protein MetN 2 (374 aa).

In terms of domain architecture, ABC transporter spans valine 32–leucine 271. Glycine 68–serine 75 lines the ATP pocket.

This sequence belongs to the ABC transporter superfamily. Methionine importer (TC 3.A.1.24) family. In terms of assembly, the complex is composed of two ATP-binding proteins (MetN), two transmembrane proteins (MetI) and a solute-binding protein (MetQ).

Its subcellular location is the cell inner membrane. The enzyme catalyses L-methionine(out) + ATP + H2O = L-methionine(in) + ADP + phosphate + H(+). It carries out the reaction D-methionine(out) + ATP + H2O = D-methionine(in) + ADP + phosphate + H(+). Its function is as follows. Part of the ABC transporter complex MetNIQ involved in methionine import. Responsible for energy coupling to the transport system. This is Methionine import ATP-binding protein MetN 2 from Pseudomonas fluorescens (strain Pf0-1).